The following is a 259-amino-acid chain: Protein N-terminal and lysine N-methyltransferase efm7 (259 aa).

S-adenosyl-L-methionine-binding positions include W56, 83-85 (GAA), D105, W139, and A163.

The protein belongs to the class I-like SAM-binding methyltransferase superfamily. EFM7 family.

The protein resides in the cytoplasm. Functionally, S-adenosyl-L-methionine-dependent protein methyltransferase that trimethylates the N-terminal glycine 'Gly-2' of elongation factor 1-alpha, before also catalyzing the mono- and dimethylation of 'Lys-3'. The chain is Protein N-terminal and lysine N-methyltransferase efm7 from Aspergillus fumigatus (strain ATCC MYA-4609 / CBS 101355 / FGSC A1100 / Af293) (Neosartorya fumigata).